The primary structure comprises 145 residues: Endosomal/vacuolar adapter protein YPT35 (145 aa).

Residues 32 to 145 (ISDVLVGEHH…STVVREFVLG (114 aa)) form the PX domain.

Belongs to the YPT35 family.

It localises to the endosome membrane. Its subcellular location is the vacuole membrane. Recruits the lipid transfer protein VPS13 to endosomal and vacuolar membranes. The chain is Endosomal/vacuolar adapter protein YPT35 (YPT35) from Meyerozyma guilliermondii (strain ATCC 6260 / CBS 566 / DSM 6381 / JCM 1539 / NBRC 10279 / NRRL Y-324) (Yeast).